Consider the following 136-residue polypeptide: Glutamyl-tRNA(Gln) amidotransferase subunit C, mitochondrial (136 aa).

This sequence belongs to the GatC family. As to quaternary structure, subunit of the heterotrimeric GatCAB amidotransferase (AdT) complex, composed of A (QRSL1), B (GATB) and C (GATC) subunits.

It localises to the mitochondrion. It carries out the reaction L-glutamyl-tRNA(Gln) + L-glutamine + ATP + H2O = L-glutaminyl-tRNA(Gln) + L-glutamate + ADP + phosphate + H(+). Allows the formation of correctly charged Gln-tRNA(Gln) through the transamidation of misacylated Glu-tRNA(Gln) in the mitochondria. The reaction takes place in the presence of glutamine and ATP through an activated gamma-phospho-Glu-tRNA(Gln). The chain is Glutamyl-tRNA(Gln) amidotransferase subunit C, mitochondrial from Homo sapiens (Human).